The sequence spans 671 residues: MPTEQTHNVVHEANGVKLRETPKEFFERQPNKGHIHDVNQYKQMYEQSIKDPQGFFGPLAKELLSWDHDFHTVKSGTLKNGDAAWFLGGELNASYNCVDRHAFANPDKPALICEADDEKDSHILTYGDLLREVSKVAGVLQSWGIKKGDTVAVYLPMNAQAIIAMLAIARLGAAHSVIFAGFSAGSIKDRVNDASCKALITCDEGKRGGRTTNIKKLCDEALVDCPTVEKVLVYKRTNNPEIHLTEGRDYYWDVETAKFPGYLPPVSVNSEDPLFLLYTSGSTGTPKGVVHSTAGYLLGAALSTKYIFDIHPEDILFTAGDVGWITGHTYALYGPLLLGVPTIIFEGTPAYPDYGRFWQIVEKHKATHFYVAPTALRLLRKAGEQEIVKYDLSSLRTLGSVGEPISPDIWEWYNEFVGKNQCHISDTYWQTESGSHLIAPLAGVVPNKPGSASYPFFGIDAALIDPVTGVEIEGNDAEGVLAIKDHWPSMARTVYKNHTKYMDTYMNPYPGYYFTGDGAARDHDGYYWIRGRVDDVVNVSGHRLSTAEIEAALIEDKKVSEAAVVGIHDDITGQAVIAYVALKEGNSDEDSEGLRKELVLQVRKTIGPFAAPKSVIIVQDLPKTRSGKIMRRILRKVSSNEADQLGDISTLSNPQSVEGIISAFGAQFGKK.

Residues 207-210 (RGGR) and T326 each bind CoA. ATP-binding positions include 402–404 (GEP), 426–431 (DTYWQT), D517, and R532. S540 is a binding site for CoA. An ATP-binding site is contributed by R543. Position 603 (R603) interacts with CoA.

This sequence belongs to the ATP-dependent AMP-binding enzyme family.

It catalyses the reaction acetate + ATP + CoA = acetyl-CoA + AMP + diphosphate. This chain is Acetyl-coenzyme A synthetase 2 (ACS2), found in Candida albicans (strain SC5314 / ATCC MYA-2876) (Yeast).